The primary structure comprises 729 residues: Fatty acid oxidation complex subunit alpha (729 aa).

The segment at 1-189 (MLYKGDTLYL…KIGLVDGVVK (189 aa)) is enoyl-CoA hydratase/isomerase. Asp-296 serves as a coordination point for substrate. Residues 311–729 (ETPKQAAVLG…ARPVGDLKTA (419 aa)) are 3-hydroxyacyl-CoA dehydrogenase. Residues Met-324, Asp-343, 400–402 (VVE), Lys-407, and Ser-429 each bind NAD(+). The For 3-hydroxyacyl-CoA dehydrogenase activity role is filled by His-450. Asn-453 lines the NAD(+) pocket. Substrate-binding residues include Asn-500 and Tyr-660. Positions 708–729 (RHNEPYYPPVEPARPVGDLKTA) are disordered.

In the N-terminal section; belongs to the enoyl-CoA hydratase/isomerase family. This sequence in the C-terminal section; belongs to the 3-hydroxyacyl-CoA dehydrogenase family. In terms of assembly, heterotetramer of two alpha chains (FadB) and two beta chains (FadA).

The catalysed reaction is a (3S)-3-hydroxyacyl-CoA + NAD(+) = a 3-oxoacyl-CoA + NADH + H(+). The enzyme catalyses a (3S)-3-hydroxyacyl-CoA = a (2E)-enoyl-CoA + H2O. It catalyses the reaction a 4-saturated-(3S)-3-hydroxyacyl-CoA = a (3E)-enoyl-CoA + H2O. It carries out the reaction (3S)-3-hydroxybutanoyl-CoA = (3R)-3-hydroxybutanoyl-CoA. The catalysed reaction is a (3Z)-enoyl-CoA = a 4-saturated (2E)-enoyl-CoA. The enzyme catalyses a (3E)-enoyl-CoA = a 4-saturated (2E)-enoyl-CoA. It participates in lipid metabolism; fatty acid beta-oxidation. In terms of biological role, involved in the aerobic and anaerobic degradation of long-chain fatty acids via beta-oxidation cycle. Catalyzes the formation of 3-oxoacyl-CoA from enoyl-CoA via L-3-hydroxyacyl-CoA. It can also use D-3-hydroxyacyl-CoA and cis-3-enoyl-CoA as substrate. This Escherichia coli O8 (strain IAI1) protein is Fatty acid oxidation complex subunit alpha.